We begin with the raw amino-acid sequence, 407 residues long: Phosphopentomutase (407 aa).

Residues aspartate 10, aspartate 306, histidine 311, aspartate 347, histidine 348, and histidine 359 each contribute to the Mn(2+) site.

Belongs to the phosphopentomutase family. Mn(2+) is required as a cofactor.

It localises to the cytoplasm. It catalyses the reaction 2-deoxy-alpha-D-ribose 1-phosphate = 2-deoxy-D-ribose 5-phosphate. The catalysed reaction is alpha-D-ribose 1-phosphate = D-ribose 5-phosphate. The protein operates within carbohydrate degradation; 2-deoxy-D-ribose 1-phosphate degradation; D-glyceraldehyde 3-phosphate and acetaldehyde from 2-deoxy-alpha-D-ribose 1-phosphate: step 1/2. In terms of biological role, isomerase that catalyzes the conversion of deoxy-ribose 1-phosphate (dRib-1-P) and ribose 1-phosphate (Rib-1-P) to deoxy-ribose 5-phosphate (dRib-5-P) and ribose 5-phosphate (Rib-5-P), respectively. The sequence is that of Phosphopentomutase from Salmonella paratyphi C (strain RKS4594).